The chain runs to 263 residues: 3'-5' ssDNA/RNA exonuclease TatD (263 aa).

3 residues coordinate a divalent metal cation: glutamate 91, histidine 127, and histidine 152.

It belongs to the metallo-dependent hydrolases superfamily. TatD-type hydrolase family. TatD subfamily. In terms of assembly, monomer. The cofactor is Mg(2+).

The protein localises to the cytoplasm. In terms of biological role, 3'-5' exonuclease that prefers single-stranded DNA and RNA. May play a role in the H(2)O(2)-induced DNA damage repair. The protein is 3'-5' ssDNA/RNA exonuclease TatD of Cronobacter sakazakii (strain ATCC BAA-894) (Enterobacter sakazakii).